A 95-amino-acid chain; its full sequence is Large ribosomal subunit protein bL27 (95 aa).

A propeptide spanning residues 1-6 (MFLQLF) is cleaved from the precursor.

This sequence belongs to the bacterial ribosomal protein bL27 family. The N-terminus is cleaved by ribosomal processing cysteine protease Prp.

This is Large ribosomal subunit protein bL27 from Symbiobacterium thermophilum (strain DSM 24528 / JCM 14929 / IAM 14863 / T).